Reading from the N-terminus, the 439-residue chain is uncharacterized protein (439 aa).

Residues 1–22 (MWVALKRFGFLSGLLALTVLSA) form the signal peptide. Residue C23 is the site of N-palmitoyl cysteine attachment. C23 carries S-diacylglycerol cysteine lipidation.

It belongs to the MG067/MG068/MG395 family.

The protein localises to the cell membrane. This is an uncharacterized protein from Mycoplasma pneumoniae (strain ATCC 29342 / M129 / Subtype 1) (Mycoplasmoides pneumoniae).